The sequence spans 58 residues: Glutathione reductase (58 aa).

FAD contacts are provided by glutamate 5, threonine 12, cysteine 13, and lysine 21. A disulfide bond links cysteine 13 and cysteine 18.

The protein belongs to the class-I pyridine nucleotide-disulfide oxidoreductase family. As to quaternary structure, homodimer. FAD serves as cofactor.

Its subcellular location is the cytoplasm. The enzyme catalyses 2 glutathione + NADP(+) = glutathione disulfide + NADPH + H(+). Catalyzes the reduction of glutathione disulfide (GSSG) to reduced glutathione (GSH). Constitutes the major mechanism to maintain a high GSH:GSSG ratio in the cytosol. This Spirulina sp protein is Glutathione reductase.